Here is a 256-residue protein sequence, read N- to C-terminus: 1-(5-phosphoribosyl)-5-[(5-phosphoribosylamino)methylideneamino] imidazole-4-carboxamide isomerase (256 aa).

The Proton acceptor role is filled by Asp8. The Proton donor role is filled by Asp129.

Belongs to the HisA/HisF family.

Its subcellular location is the cytoplasm. The enzyme catalyses 1-(5-phospho-beta-D-ribosyl)-5-[(5-phospho-beta-D-ribosylamino)methylideneamino]imidazole-4-carboxamide = 5-[(5-phospho-1-deoxy-D-ribulos-1-ylimino)methylamino]-1-(5-phospho-beta-D-ribosyl)imidazole-4-carboxamide. Its pathway is amino-acid biosynthesis; L-histidine biosynthesis; L-histidine from 5-phospho-alpha-D-ribose 1-diphosphate: step 4/9. This is 1-(5-phosphoribosyl)-5-[(5-phosphoribosylamino)methylideneamino] imidazole-4-carboxamide isomerase from Prochlorococcus marinus (strain NATL1A).